We begin with the raw amino-acid sequence, 323 residues long: E3 ubiquitin-protein ligase makorin (323 aa).

2 C3H1-type zinc fingers span residues 1–28 and 29–56; these read MSDRILCKFFVHGSCLKGENCEFSHDSK and DPPNNVCTFYQKRICLYGSRCRYDHVRA. Positions 62 to 74 are enriched in low complexity; that stretch reads LSSDSESLDRSIS. A disordered region spans residues 62 to 92; it reads LSSDSESLDRSISTTPSRHLQQQGDNNDGDK. The segment covering 75 to 87 has biased composition (polar residues); it reads TTPSRHLQQQGDN. Residues 101 to 128 form a C3H1-type 3 zinc finger; the sequence is PREYPICSFAAAGDCPRGNQCPHMHGDL. The segment at 129–158 is makorin-type Cys-His; that stretch reads CNTCGKKCLHPFRPEEREEHTKECEKKQKH. The RING-type zinc finger occupies 170–228; the sequence is CSVCLDRILSKATPGERKFGLLTECDHPFCIQCIRNWRSSAPVSGMDVNSTLRACPICR. The segment at 257–286 adopts a C3H1-type 4 zinc-finger fold; the sequence is KLRSIDCKHFNFGNGNCPFGASCFYKHAYS.

The catalysed reaction is S-ubiquitinyl-[E2 ubiquitin-conjugating enzyme]-L-cysteine + [acceptor protein]-L-lysine = [E2 ubiquitin-conjugating enzyme]-L-cysteine + N(6)-ubiquitinyl-[acceptor protein]-L-lysine.. Its pathway is protein modification; protein ubiquitination. Functionally, E3 ubiquitin ligase catalyzing the covalent attachment of ubiquitin moieties onto substrate proteins. The sequence is that of E3 ubiquitin-protein ligase makorin (MKRN) from Arabidopsis thaliana (Mouse-ear cress).